The primary structure comprises 482 residues: Catalase (482 aa).

Polar residues predominate over residues 1-11 (MNAMTNKTLTT). Residues 1–21 (MNAMTNKTLTTAAGAPVADNN) form a disordered region. Catalysis depends on residues His-57 and Asn-130. Heme is bound at residue Tyr-340.

Belongs to the catalase family. As to quaternary structure, homodimer. It depends on heme as a cofactor.

It carries out the reaction 2 H2O2 = O2 + 2 H2O. Its function is as follows. Decomposes hydrogen peroxide into water and oxygen; serves to protect cells from the toxic effects of hydrogen peroxide. This is Catalase (katA) from Bordetella bronchiseptica (strain ATCC BAA-588 / NCTC 13252 / RB50) (Alcaligenes bronchisepticus).